The following is a 1846-amino-acid chain: Unconventional myosin-Vb (1846 aa).

Residues 8 to 60 form the Myosin N-terminal SH3-like domain; the sequence is SRYTRVWIPDPDEVWRSAELTKDYKDGDESLQLRLEDDTILDYPIDVQNNQVP. A requires for interaction with LIMA1 region spans residues 21–40; the sequence is VWRSAELTKDYKDGDESLQL. One can recognise a Myosin motor domain in the interval 69 to 763; the sequence is VGENDLTALS…QVAYLEKLRA (695 aa). 163 to 170 contacts ATP; the sequence is GESGAGKT. Residues 599 to 629 are disordered; sequence VPATNTAKSRSSSKINVRSSRPLMKAPNKEH. Residues 607–619 are compositionally biased toward low complexity; the sequence is SRSSSKINVRSSR. An actin-binding region spans residues 641–663; it reads LNLLMETLNATTPHYVRCIKPND. 6 consecutive IQ domains span residues 767–788, 789–813, 814–837, 838–861, 862–884, and 885–914; these read REATIMIQKTVRGWLQRVKYRR, LRAATLTLQRFCRGYLARRLTEHLR, RTRAAIVFQKQYRMLKARRAYCRV, RRAAVIIQSYTRGHVCTQKLPPVL, TEHKATIIQKYARGWMARRHFQR, and QRDAAIVIQCAFRRLKARQALKALKIEARS. 2 coiled-coil regions span residues 915-1272 and 1334-1450; these read AEHL…ADQR and LKQV…RHHE. The segment at 1088-1122 is disordered; it reads RDEQQTPGHRKNPSNQSSLESDSNYPSISTSEIGD. Polar residues predominate over residues 1100–1120; the sequence is PSNQSSLESDSNYPSISTSEI. Phosphoserine is present on Ser-1444. The Dilute domain occupies 1524–1801; sequence SSTINGIKKV…IRTIQAQLQE (278 aa).

Belongs to the TRAFAC class myosin-kinesin ATPase superfamily. Myosin family. Component of the CART complex, at least composed of ACTN4, HGS/HRS, MYO5B and TRIM3. Interacts with RAB11FIP2. Interacts with RAB11A and RAB8A. Found in a complex with CFTR and RAB11A. Interacts with NPC1L1. Interacts with LIMA1.

The protein localises to the cytoplasm. In terms of biological role, may be involved in vesicular trafficking via its association with the CART complex. The CART complex is necessary for efficient transferrin receptor recycling but not for EGFR degradation. Required in a complex with RAB11A and RAB11FIP2 for the transport of NPC1L1 to the plasma membrane. Together with RAB11A participates in CFTR trafficking to the plasma membrane and TF (transferrin) recycling in nonpolarized cells. Together with RAB11A and RAB8A participates in epithelial cell polarization. Together with RAB25 regulates transcytosis. Required for proper localization of bile salt export pump ABCB11 at the apical/canalicular plasma membrane of hepatocytes. The polypeptide is Unconventional myosin-Vb (Myo5b) (Rattus norvegicus (Rat)).